Reading from the N-terminus, the 102-residue chain is Small ribosomal subunit protein uS10 (102 aa).

This sequence belongs to the universal ribosomal protein uS10 family. In terms of assembly, part of the 30S ribosomal subunit.

Functionally, involved in the binding of tRNA to the ribosomes. In Exiguobacterium sibiricum (strain DSM 17290 / CCUG 55495 / CIP 109462 / JCM 13490 / 255-15), this protein is Small ribosomal subunit protein uS10.